A 212-amino-acid polypeptide reads, in one-letter code: MSEDKNYIIDPLTALCKVALLHFMPDKTKLAINHHVLYIQGYSYYQWLERMKNGDSRVDISNLNMPIIKAVKWYIIDSEDKAELDSETCNNILIITKYTIKGLIKLQQTYCTDNAIKIILQYLINLLRDAIDNNWNDDNCVKIDNHHNILSDKIKKNFESQTISAISKILTDAERMSGSQEDVNALIDCAHKLLINRDTVFVRMMKEVNTHL.

This is an uncharacterized protein from Acanthamoeba polyphaga (Amoeba).